A 132-amino-acid chain; its full sequence is NAD(P) transhydrogenase subunit alpha part 2 (132 aa).

The next 3 helical transmembrane spans lie at 43–63, 72–92, and 103–123; these read PLVF…YVVW, PLMS…MIAI, and LLGS…FIVT.

As to quaternary structure, complex of an alpha and a beta chain; in Rickettsia, the alpha chain seems to be made of two subunits.

Its subcellular location is the cell inner membrane. The enzyme catalyses NAD(+) + NADPH + H(+)(in) = NADH + NADP(+) + H(+)(out). Functionally, the transhydrogenation between NADH and NADP is coupled to respiration and ATP hydrolysis and functions as a proton pump across the membrane. The protein is NAD(P) transhydrogenase subunit alpha part 2 (pntAB) of Rickettsia prowazekii (strain Madrid E).